Reading from the N-terminus, the 92-residue chain is Small ribosomal subunit protein uS17 (92 aa).

The protein belongs to the universal ribosomal protein uS17 family. In terms of assembly, part of the 30S ribosomal subunit.

Its function is as follows. One of the primary rRNA binding proteins, it binds specifically to the 5'-end of 16S ribosomal RNA. The polypeptide is Small ribosomal subunit protein uS17 (Corynebacterium diphtheriae (strain ATCC 700971 / NCTC 13129 / Biotype gravis)).